The primary structure comprises 555 residues: uncharacterized protein (555 aa).

2 ABC transporter domains span residues 4–244 (VKVK…PPYK) and 255–547 (IQVR…ARFM). Residues 36–43 (GKSGAGKS) and 292–299 (GPSGVGKT) contribute to the ATP site.

It belongs to the ABC transporter superfamily.

This is an uncharacterized protein from Methanocaldococcus jannaschii (strain ATCC 43067 / DSM 2661 / JAL-1 / JCM 10045 / NBRC 100440) (Methanococcus jannaschii).